A 300-amino-acid polypeptide reads, in one-letter code: Sodium/potassium/calcium exchanger 1 (300 aa).

The disordered stretch occupies residues 1 to 251 (DPGSQGVGAE…ENEQPLSLEW (251 aa)). Composition is skewed to acidic residues over residues 92-102 (GEVEGDEDEGE), 109-119 (GEVEGDEDEGE), 126-136 (GEVEGDEDEGE), 158-175 (GEVE…DEGE), and 215-244 (GDSE…EENE). Residues 259–275 (AIYLFLLPIVFPLWLTV) form a helical membrane-spanning segment.

The protein belongs to the Ca(2+):cation antiporter (CaCA) (TC 2.A.19) family. SLC24A subfamily. In terms of processing, the uncleaved signal sequence is required for efficient membrane targeting and proper membrane integration and topology.

It localises to the cell membrane. The catalysed reaction is Ca(2+)(out) + K(+)(out) + 4 Na(+)(in) = Ca(2+)(in) + K(+)(in) + 4 Na(+)(out). In terms of biological role, calcium, potassium:sodium antiporter that transports 1 Ca(2+) and 1 K(+) in exchange for 4 Na(+). Critical component of the visual transduction cascade, controlling the calcium concentration of outer segments during light and darkness. Light causes a rapid lowering of cytosolic free calcium in the outer segment of both retinal rod and cone photoreceptors and the light-induced lowering of calcium is caused by extrusion via this protein which plays a key role in the process of light adaptation. The chain is Sodium/potassium/calcium exchanger 1 (SLC24A1) from Bison bison (American bison).